Reading from the N-terminus, the 248-residue chain is 2,3-bisphosphoglycerate-dependent phosphoglycerate mutase (248 aa).

Substrate contacts are provided by residues arginine 8–asparagine 15 and arginine 58. Histidine 9 acts as the Tele-phosphohistidine intermediate in catalysis. The interval glycine 82–lysine 101 is disordered. Glutamate 124 acts as the Proton donor/acceptor in catalysis. Substrate contacts are provided by residues glutamate 124–tyrosine 127 and lysine 135.

It belongs to the phosphoglycerate mutase family. BPG-dependent PGAM subfamily.

It catalyses the reaction (2R)-2-phosphoglycerate = (2R)-3-phosphoglycerate. It functions in the pathway carbohydrate degradation; glycolysis; pyruvate from D-glyceraldehyde 3-phosphate: step 3/5. Functionally, catalyzes the interconversion of 2-phosphoglycerate and 3-phosphoglycerate. The polypeptide is 2,3-bisphosphoglycerate-dependent phosphoglycerate mutase (Methanosarcina acetivorans (strain ATCC 35395 / DSM 2834 / JCM 12185 / C2A)).